The chain runs to 521 residues: Acidic amino acid decarboxylase GADL1 (521 aa).

An N6-(pyridoxal phosphate)lysine modification is found at K333.

This sequence belongs to the group II decarboxylase family. In terms of assembly, homodimer. Pyridoxal 5'-phosphate serves as cofactor. Expressed very weakly in neurons and not detected in astrocytes, brain or liver.

It carries out the reaction L-aspartate + H(+) = beta-alanine + CO2. It catalyses the reaction 3-sulfino-L-alanine + H(+) = hypotaurine + CO2. The enzyme catalyses L-cysteate + H(+) = taurine + CO2. Functionally, may catalyze the decarboxylation of L-aspartate, 3-sulfino-L-alanine (cysteine sulfinic acid), and L-cysteate to beta-alanine, hypotaurine and taurine, respectively. Does not exhibit any decarboxylation activity toward glutamate. In Homo sapiens (Human), this protein is Acidic amino acid decarboxylase GADL1 (GADL1).